Consider the following 420-residue polypeptide: Polyketide biosynthesis 3-hydroxy-3-methylglutaryl-ACP synthase PksG (420 aa).

The active-site Proton donor/acceptor is the E82. Residue C114 is the Acyl-thioester intermediate of the active site. Catalysis depends on H250, which acts as the Proton donor/acceptor.

The protein belongs to the thiolase-like superfamily. HMG-CoA synthase family.

Its subcellular location is the cytoplasm. It catalyses the reaction 3-oxobutanoyl-[ACP] + acetyl-[ACP] + H2O = (3S)-hydroxy-3-methylglutaryl-[ACP] + holo-[ACP] + H(+). Its pathway is antibiotic biosynthesis; bacillaene biosynthesis. Its function is as follows. Involved in some intermediate steps for the synthesis of the antibiotic polyketide bacillaene which is involved in secondary metabolism. It catalyzes the aldol condensation between the acetyl group attached to the acyl-carrier-protein AcpK (Ac-AcpK) and a beta-ketothioester polyketide intermediate linked to one of the consecutive thiolation domains of PksL. This chain is Polyketide biosynthesis 3-hydroxy-3-methylglutaryl-ACP synthase PksG (pksG), found in Bacillus subtilis (strain 168).